A 39-amino-acid chain; its full sequence is Potassium channel toxin alpha-KTx 2.5 (39 aa).

Cystine bridges form between Cys7/Cys29, Cys13/Cys34, and Cys17/Cys36.

The protein belongs to the short scorpion toxin superfamily. Potassium channel inhibitor family. Alpha-KTx 02 subfamily. In terms of tissue distribution, expressed by the venom gland.

The protein localises to the secreted. Its function is as follows. Potent selective inhibitor of Kv1.1/KCNA1, Kv1.2/KCNA2, Kv1.3/KCNA3 voltage-gated potassium channels. Weak inhibitor of Kv1.6/KCNA6 potassium channel. It also shows a weak interaction with nicotinic acetylcholine receptors (nAChR), suggesting it may weakly inhibit it. This chain is Potassium channel toxin alpha-KTx 2.5, found in Centruroides limbatus (Bark scorpion).